A 906-amino-acid polypeptide reads, in one-letter code: Catenin alpha-1 (906 aa).

Position 2 is an N-acetylthreonine (Thr2). The tract at residues 2 to 228 (TAVHAGNINF…PILYTASQAC (227 aa)) is involved in homodimerization. Residue Lys57 forms a Glycyl lysine isopeptide (Lys-Gly) (interchain with G-Cter in SUMO2) linkage. The interaction with JUP and CTNNB1 stretch occupies residues 97–148 (VRKQGDLMKSAAGEFADDPCSSVKRGNMVRAARALLSAVTRLLILADMADVY). A phosphoserine mark is found at Ser264, Ser295, and Ser297. Positions 325–394 (TRDDRRERIV…AVMDHVSDSF (70 aa)) are interaction with alpha-actinin. The residue at position 634 (Thr634) is a Phosphothreonine. The residue at position 641 (Ser641) is a Phosphoserine. Thr645 is modified (phosphothreonine). Ser652 and Ser655 each carry phosphoserine. Thr658 is subject to Phosphothreonine. A Glycyl lysine isopeptide (Lys-Gly) (interchain with G-Cter in SUMO2) cross-link involves residue Lys797. Ser851 bears the Phosphoserine mark. The span at 864-880 (PEKKPLVKREKQDETQT) shows a compositional bias: basic and acidic residues. The segment at 864-894 (PEKKPLVKREKQDETQTKIKRASQKKHVNPV) is disordered. The segment covering 881–891 (KIKRASQKKHV) has biased composition (basic residues).

This sequence belongs to the vinculin/alpha-catenin family. In terms of assembly, monomer and homodimer; the monomer preferentially binds to CTNNB1 and the homodimer to actin. Component of an cadherin:catenin adhesion complex composed of at least of CDH26, beta-catenin/CTNNB1, alpha-catenin/CTNNA1 and p120 catenin/CTNND1. Possible component of an E-cadherin/ catenin adhesion complex together with E-cadherin/CDH1 and beta-catenin/CTNNB1 or gamma-catenin/JUP; the complex is located to adherens junctions. The stable association of CTNNA1 is controversial as CTNNA1 was shown not to bind to F-actin when assembled in the complex. Alternatively, the CTNNA1-containing complex may be linked to F-actin by other proteins such as LIMA1. Binds AFDN and F-actin. Interacts with LIMA1. Interacts with ARHGAP21. Interacts with AJUBA. Interacts with vinculin/VCL. Interacts with TJP2/ZO2 (via N-terminus). Interacts with TJP1/ZO1 (via N-terminus). Sumoylated. In terms of processing, phosphorylation seems to contribute to the strength of cell-cell adhesion rather than to the basic capacity for cell-cell adhesion. In terms of tissue distribution, expressed in cerebellum, heart, liver, small intestine, kidney and placenta (at protein level).

The protein resides in the cytoplasm. Its subcellular location is the cytoskeleton. It is found in the cell junction. The protein localises to the adherens junction. It localises to the cell membrane. The protein resides in the nucleus. In terms of biological role, associates with the cytoplasmic domain of a variety of cadherins. The association of catenins to cadherins produces a complex which is linked to the actin filament network, and which seems to be of primary importance for cadherins cell-adhesion properties. Can associate with both E- and N-cadherins. Originally believed to be a stable component of E-cadherin/catenin adhesion complexes and to mediate the linkage of cadherins to the actin cytoskeleton at adherens junctions. In contrast, cortical actin was found to be much more dynamic than E-cadherin/catenin complexes and CTNNA1 was shown not to bind to F-actin when assembled in the complex suggesting a different linkage between actin and adherens junctions components. The homodimeric form may regulate actin filament assembly and inhibit actin branching by competing with the Arp2/3 complex for binding to actin filaments. Involved in the regulation of WWTR1/TAZ, YAP1 and TGFB1-dependent SMAD2 and SMAD3 nuclear accumulation. May play a crucial role in cell differentiation. The protein is Catenin alpha-1 of Mus musculus (Mouse).